We begin with the raw amino-acid sequence, 491 residues long: Anhydromuropeptide permease (491 aa).

Residues 1 to 11 (MSSQYLRIFQQ) lie on the Cytoplasmic side of the membrane. The chain crosses the membrane as a helical span at residues 12-32 (PRSAILLILGFASGLPLALTS). The Periplasmic segment spans residues 33 to 47 (GTLQAWMTVENIDLK). A helical membrane pass occupies residues 48-61 (TIGFFSLVGQAYVF). The Cytoplasmic segment spans residues 62 to 81 (KFLWSPLMDRYTPPFFGRRR). The chain crosses the membrane as a helical span at residues 82-105 (GWLLATQILLLVAIAAMGFLEPGT). Residue Gln-106 is a topological domain, periplasmic. A helical membrane pass occupies residues 107 to 124 (LRWMAALAVVIAFCSASQ). The Cytoplasmic portion of the chain corresponds to 125-221 (DIVFDAWKTD…VAPLRDFFGR (97 aa)). Residues 222–240 (NNAWLILLLIVLYKLGDAF) form a helical membrane-spanning segment. Topologically, residues 241 to 264 (AMSLTTTFLIRGVGFDAGEVGVVN) are periplasmic. A helical transmembrane segment spans residues 265 to 284 (KTLGLLATIVGALYGGILMQ). The Cytoplasmic portion of the chain corresponds to 285-287 (RLS). A helical transmembrane segment spans residues 288–303 (LFRALLIFGILQGASN). At 304 to 327 (AGYWLLSITDKHLYSMGAAVFFEN) the chain is on the periplasmic side. The chain crosses the membrane as a helical span at residues 328 to 346 (LCGGMGTSAFVALLMTLCN). Topologically, residues 347 to 421 (KSFSATQFAL…NDNFISRTAY (75 aa)) are cytoplasmic. The helical transmembrane segment at 422–453 (PAGYAFAMWTLAAGVSLLAVWLLLLTMDALDL) threads the bilayer. Residues 454–457 (THFS) lie on the Periplasmic side of the membrane. The chain crosses the membrane as a helical span at residues 458–485 (FLPALLEVGVLVALSGVVLGGLLDYLAL). Topologically, residues 486–491 (RKTHLT) are cytoplasmic.

Belongs to the major facilitator superfamily.

Its subcellular location is the cell inner membrane. Permease involved in cell wall peptidoglycan recycling. Transports, from the periplasm into the cytoplasm, the disaccharide N-acetylglucosaminyl-beta-1,4-anhydro-N-acetylmuramic acid (GlcNAc-anhMurNAc) and GlcNAc-anhMurNAc-peptides. Transport is dependent on the proton motive force. This Escherichia coli O157:H7 protein is Anhydromuropeptide permease (ampG).